A 336-amino-acid chain; its full sequence is Succinylglutamate desuccinylase (336 aa).

Zn(2+) contacts are provided by H59, E62, and H151. The active site involves E215.

The protein belongs to the AspA/AstE family. Succinylglutamate desuccinylase subfamily. Zn(2+) is required as a cofactor.

The catalysed reaction is N-succinyl-L-glutamate + H2O = L-glutamate + succinate. Its pathway is amino-acid degradation; L-arginine degradation via AST pathway; L-glutamate and succinate from L-arginine: step 5/5. Transforms N(2)-succinylglutamate into succinate and glutamate. The sequence is that of Succinylglutamate desuccinylase from Pseudomonas fluorescens (strain Pf0-1).